The following is a 161-amino-acid chain: Nucleotide-binding protein Dtpsy_2240 (161 aa).

This sequence belongs to the YajQ family.

In terms of biological role, nucleotide-binding protein. The sequence is that of Nucleotide-binding protein Dtpsy_2240 from Acidovorax ebreus (strain TPSY) (Diaphorobacter sp. (strain TPSY)).